Here is a 367-residue protein sequence, read N- to C-terminus: Flagellar P-ring protein (367 aa).

A signal peptide spans 1-18 (MFRALITALFCFSGLALA).

Belongs to the FlgI family. In terms of assembly, the basal body constitutes a major portion of the flagellar organelle and consists of four rings (L,P,S, and M) mounted on a central rod.

The protein localises to the periplasm. Its subcellular location is the bacterial flagellum basal body. Its function is as follows. Assembles around the rod to form the L-ring and probably protects the motor/basal body from shearing forces during rotation. The protein is Flagellar P-ring protein of Rhizorhabdus wittichii (strain DSM 6014 / CCUG 31198 / JCM 15750 / NBRC 105917 / EY 4224 / RW1) (Sphingomonas wittichii).